We begin with the raw amino-acid sequence, 279 residues long: Protein phosphatase 1 regulatory subunit 3E (279 aa).

Residues S16 and S33 each carry the phosphoserine modification. The disordered stretch occupies residues 28 to 89; the sequence is RSQRPSLEEE…RSPDTRKRVR (62 aa). Residues 51–65 are compositionally biased toward basic residues; sequence ARSRAHVPGRGRRAR. Residue S66 is modified to Phosphoserine. Positions 87-90 match the PP1-binding motif motif; that stretch reads RVRF. Residues 154–259 enclose the CBM21 domain; that stretch reads AARLQAQRIC…NNGGRDYALL (106 aa). The glycogen-binding motif stretch occupies residues 176 to 198; the sequence is GSARVLDLAYEKRVSVRWSADGW. Positions 248-256 are substrate-binding motif; the sequence is WDNNGGRDY.

As to expression, expressed in liver and heart, with low levels in skeletal muscle.

Acts as a glycogen-targeting subunit for PP1. PP1 is involved in glycogen metabolism and contributes to the activation of glycogen synthase leading to an increase in glycogen synthesis. The polypeptide is Protein phosphatase 1 regulatory subunit 3E (Ppp1r3e) (Rattus norvegicus (Rat)).